We begin with the raw amino-acid sequence, 282 residues long: Serine/arginine-rich splicing factor 8 (282 aa).

N-acetylserine is present on S2. S2 and S26 each carry phosphoserine. Positions 14–92 (ITLKVDNLTY…RELRVQVARY (79 aa)) constitute an RRM domain. The segment at 91-282 (RYGRRDLPRS…SPEEEGQMSS (192 aa)) is disordered. Over residues 93-107 (GRRDLPRSRQGEPRG) the composition is skewed to basic and acidic residues. 2 stretches are compositionally biased toward basic residues: residues 116–136 (RRSR…RSRS) and 144–154 (SRSRSRYRGSR). 2 stretches are compositionally biased toward low complexity: residues 155-177 (YSRS…PYSR) and 185-200 (YGGS…NSRY). Phosphoserine occurs at positions 156, 158, 171, 173, and 196. The span at 201–210 (SRYHSSRSHS) shows a compositional bias: basic residues. 2 stretches are compositionally biased toward low complexity: residues 211-227 (KSGS…SKSS) and 234-255 (SSSV…SPPR). Basic residues predominate over residues 256–271 (VSKRKSKSRSRSKRPP). Residue S273 is modified to Phosphoserine.

The protein belongs to the splicing factor SR family. In terms of tissue distribution, strongly expressed in pancreas, spleen and prostate. Weakly expressed in lung, liver and thymus.

Its subcellular location is the nucleus. Involved in pre-mRNA alternative splicing. In Homo sapiens (Human), this protein is Serine/arginine-rich splicing factor 8 (SRSF8).